The following is a 181-amino-acid chain: Negative modulator of initiation of replication (181 aa).

Interaction with DNA stretches follow at residues 87–88 (AV), 116–120 (RTRVY), and 150–156 (NTNTGRK).

This sequence belongs to the SeqA family. As to quaternary structure, homodimer. Polymerizes to form helical filaments.

It localises to the cytoplasm. Its function is as follows. Negative regulator of replication initiation, which contributes to regulation of DNA replication and ensures that replication initiation occurs exactly once per chromosome per cell cycle. Binds to pairs of hemimethylated GATC sequences in the oriC region, thus preventing assembly of replication proteins and re-initiation at newly replicated origins. Repression is relieved when the region becomes fully methylated. The protein is Negative modulator of initiation of replication of Shigella dysenteriae serotype 1 (strain Sd197).